The following is a 521-amino-acid chain: CDP-diacylglycerol--glycerol-3-phosphate 3-phosphatidyltransferase (521 aa).

Position 91-98 (91-98) interacts with ATP; the sequence is ASLYLGKS. PLD phosphodiesterase domains are found at residues 177–203 and 419–457; these read GLGLQHMKIYGFDNEIILSGANLSNDY and NGWSYHAKGIWISSRDNNDSDSWKPFITVIGSSNYTRRA. Catalysis depends on residues His182, Lys184, and Asp189.

This sequence belongs to the CDP-alcohol phosphatidyltransferase class-II family.

The protein localises to the mitochondrion. The enzyme catalyses a CDP-1,2-diacyl-sn-glycerol + sn-glycerol 3-phosphate = a 1,2-diacyl-sn-glycero-3-phospho-(1'-sn-glycero-3'-phosphate) + CMP + H(+). Its pathway is phospholipid metabolism; phosphatidylglycerol biosynthesis; phosphatidylglycerol from CDP-diacylglycerol: step 1/2. Its function is as follows. Essential for the viability of mitochondrial petite mutant. Catalyzes the committed step to the synthesis of the acidic phospholipids. This is CDP-diacylglycerol--glycerol-3-phosphate 3-phosphatidyltransferase (PGS1) from Saccharomyces pastorianus (Lager yeast).